We begin with the raw amino-acid sequence, 127 residues long: MLQLLLAVFIGGGTGSVARWFLSMRFNPMHQAIPLGTLTANLIGAFIIGVGLAWFNRMTHIDPMWKLLITTGFCGGLTTFSTFSAEVVFLLQDGRINWALANIAVNMLGSFAMTALAFWLFSAASAH.

A run of 4 helical transmembrane segments spans residues 4–24, 35–55, 71–91, and 103–123; these read LLLA…FLSM, LGTL…LAWF, TGFC…VFLL, and IAVN…LFSA. The Na(+) site is built by Gly-75 and Thr-78.

The protein belongs to the fluoride channel Fluc/FEX (TC 1.A.43) family.

Its subcellular location is the cell inner membrane. The enzyme catalyses fluoride(in) = fluoride(out). With respect to regulation, na(+) is not transported, but it plays an essential structural role and its presence is essential for fluoride channel function. In terms of biological role, fluoride-specific ion channel. Important for reducing fluoride concentration in the cell, thus reducing its toxicity. In Enterobacter sp. (strain 638), this protein is Fluoride-specific ion channel FluC.